A 78-amino-acid polypeptide reads, in one-letter code: Conotoxin Bu2 (78 aa).

A signal peptide spans 1 to 19 (MKLTCVLIIAVLFLTAITA). Positions 20–41 (DDSRDKQVYRAVGLIDKMRRIR) are excised as a propeptide. 3 disulfides stabilise this stretch: Cys-46-Cys-59, Cys-53-Cys-64, and Cys-58-Cys-73.

Belongs to the conotoxin O1 superfamily. As to expression, expressed by the venom duct.

It localises to the secreted. This chain is Conotoxin Bu2, found in Conus bullatus (Bubble cone).